Consider the following 453-residue polypeptide: MVLLLPWLFIILWLENAQAQLEDEGNFYSENVSRILDNLLEGYDNRLRPGFGGAVTEVKTDIYVTSFGPVSDVEMEYTMDVFFRQTWTDERLKFKGPAEILSLNNLMVSKIWTPDTFFRNGKKSIAHNMTTPNKLFRLMQNGTILYTMRLTINADCPMRLVNFPMDGHACPLKFGSYAYPKTEIIYTWKKGPLYSVEVPEESSSLLQYDLIGQTVSSETIKSNTGEYVIMTVYFHLQRKMGYFMIQIYTPCIMTVILSQVSFWINKESVPARTVFGITTVLTMTTLSISARHSLPKVSYATAMDWFIAVCFAFVFSALIEFAAVNYFTNLQSQKAERQAQTAATPPVAKSKASESLQAEIVVHSDSKYHLKKRISSLTLPIVPSSEASKALSRTPILKSTPVSPPLLLPATGGTSKIDQYSRILFPVAFAGFNLVYWIVYLSKDTMEVSSTVE.

The signal sequence occupies residues 1-19 (MVLLLPWLFIILWLENAQA). The Extracellular segment spans residues 20-243 (QLEDEGNFYS…FHLQRKMGYF (224 aa)). Asparagine 31 carries N-linked (GlcNAc...) asparagine glycosylation. Arginine 84 contributes to the 4-aminobutanoate binding site. N-linked (GlcNAc...) asparagine glycans are attached at residues asparagine 128 and asparagine 141. Threonine 147 serves as a coordination point for 4-aminobutanoate. An intrachain disulfide couples cysteine 156 to cysteine 170. A helical transmembrane segment spans residues 244 to 264 (MIQIYTPCIMTVILSQVSFWI). Residues 265-270 (NKESVP) are Cytoplasmic-facing. The chain crosses the membrane as a helical span at residues 271-290 (ARTVFGITTVLTMTTLSISA). Topologically, residues 291–304 (RHSLPKVSYATAMD) are extracellular. Residues 305–325 (WFIAVCFAFVFSALIEFAAVN) traverse the membrane as a helical segment. Residues 326–422 (YFTNLQSQKA…GTSKIDQYSR (97 aa)) lie on the Cytoplasmic side of the membrane. At serine 375 the chain carries Phosphoserine. A helical transmembrane segment spans residues 423 to 443 (ILFPVAFAGFNLVYWIVYLSK). At 444-453 (DTMEVSSTVE) the chain is on the extracellular side.

It belongs to the ligand-gated ion channel (TC 1.A.9) family. Gamma-aminobutyric acid receptor (TC 1.A.9.5) subfamily. GABRA6 sub-subfamily. As to quaternary structure, heteropentamer, formed by a combination of alpha (GABRA1-6), beta (GABRB1-3), gamma (GABRG1-3), delta (GABRD), epsilon (GABRE), rho (GABRR1-3), pi (GABRP) and theta (GABRQ) chains, each subunit exhibiting distinct physiological and pharmacological properties. Binds UBQLN1. In terms of tissue distribution, expressed in brain, in cerebellar granule cells.

It is found in the postsynaptic cell membrane. It localises to the cell membrane. It carries out the reaction chloride(in) = chloride(out). In terms of biological role, alpha subunit of the heteropentameric ligand-gated chloride channel gated by gamma-aminobutyric acid (GABA), a major inhibitory neurotransmitter in the brain. GABA-gated chloride channels, also named GABA(A) receptors (GABAAR), consist of five subunits arranged around a central pore and contain GABA active binding site(s) located at the alpha and beta subunit interface(s). When activated by GABA, GABAARs selectively allow the flow of chloride anions across the cell membrane down their electrochemical gradient. Alpha-6/GABRA6 subunits are found at both synaptic and extrasynaptic sites. Chloride influx into the postsynaptic neuron following GABAAR opening decreases the neuron ability to generate a new action potential, thereby reducing nerve transmission. Extrasynaptic alpha-6-containing receptors contribute to the tonic GABAergic inhibition. Alpha-6 subunits are also present on glutamatergic synapses. The chain is Gamma-aminobutyric acid receptor subunit alpha-6 from Mus musculus (Mouse).